Consider the following 198-residue polypeptide: Peptidyl-tRNA hydrolase (198 aa).

Tyrosine 14 contributes to the tRNA binding site. Histidine 19 serves as the catalytic Proton acceptor. Tyrosine 64, asparagine 66, and asparagine 112 together coordinate tRNA.

It belongs to the PTH family. In terms of assembly, monomer.

It is found in the cytoplasm. It catalyses the reaction an N-acyl-L-alpha-aminoacyl-tRNA + H2O = an N-acyl-L-amino acid + a tRNA + H(+). Functionally, hydrolyzes ribosome-free peptidyl-tRNAs (with 1 or more amino acids incorporated), which drop off the ribosome during protein synthesis, or as a result of ribosome stalling. Catalyzes the release of premature peptidyl moieties from peptidyl-tRNA molecules trapped in stalled 50S ribosomal subunits, and thus maintains levels of free tRNAs and 50S ribosomes. This Beijerinckia indica subsp. indica (strain ATCC 9039 / DSM 1715 / NCIMB 8712) protein is Peptidyl-tRNA hydrolase.